A 325-amino-acid chain; its full sequence is mRNA decay activator protein ZFP36 (325 aa).

Positions 1-15 (MDLAAIYKSLLSLSP) are necessary for nuclear export. The necessary and sufficient for the association with mRNA decay enzymes and mRNA decay activation stretch occupies residues 1 to 98 (MDLAAIYKSL…PTSPTATPTT (98 aa)). Necessary for localization of ARE-containing mRNAs to processing bodies (PBs) stretches follow at residues 1 to 172 (MDLA…DLAA) and 98 to 325 (TSSR…SVSE). The span at 15–48 (PELPSDLGETESSTSWASSGPWSLSSSDSSLPEA) shows a compositional bias: low complexity. The disordered stretch occupies residues 15-101 (PELPSDLGET…PTATPTTSSR (87 aa)). S58 carries the post-translational modification Phosphoserine; by MAPKAPK2. Residue S64 is modified to Phosphoserine. One copy of the P-P-P-P-G repeat lies at 69 to 73 (PPPPG). Residues 75 to 101 (APLAPRPSSELSPSPTSPTATPTTSSR) are compositionally biased toward low complexity. Phosphoserine occurs at positions 86 and 88. Phosphothreonine is present on T90. S91 carries the post-translational modification Phosphoserine. Residues 93 to 166 (TATPTTSSRY…GSRCHFIHNP (74 aa)) form a necessary for nuclear localization region. The necessary for RNA-binding stretch occupies residues 95 to 171 (TPTTSSRYKT…FIHNPSEDLA (77 aa)). 2 consecutive C3H1-type zinc fingers follow at residues 101–129 (RYKT…HGLG) and 139–167 (KYKT…HNPS). The necessary for interaction with PABPN1 stretch occupies residues 101-192 (RYKTELCRTF…ISFSGLPSGR (92 aa)). S167 is modified (phosphoserine). Residues 172–325 (APGHPHVLRQ…PIFNRISVSE (154 aa)) form a necessary for mRNA decay activation region. At S184 the chain carries Phosphoserine; by MAPKAPK2. Disordered regions lie at residues 185-248 (FSGL…TPAC) and 260-325 (VWGP…SVSE). S195 is subject to Phosphoserine. One copy of the P-P-P-P-G repeat lies at 196–200 (PPPAS). A compositionally biased stretch (low complexity) spans 204 to 214 (PSVPSWSFSPS). S216 carries the phosphoserine modification. One copy of the P-P-P-P-G repeat lies at 217–222 (PPPPPG). The residue at position 227 (S227) is a Phosphoserine; by MAPK1; in vitro. Phosphoserine occurs at positions 275, 295, and 322. Over residues 285-295 (SSGSSLGGSDS) the composition is skewed to low complexity. The tract at residues 311-325 (APRRLPIFNRISVSE) is interaction with CNOT1.

In terms of assembly, associates with cytoplasmic CCR4-NOT and PAN2-PAN3 deadenylase complexes to trigger ARE-containing mRNA deadenylation and decay processes. Part of a mRNA decay activation complex at least composed of poly(A)-specific exoribonucleases CNOT6, EXOSC2 and XRN1 and mRNA-decapping enzymes DCP1A and DCP2. Associates with the RNA exosome complex. Interacts (via phosphorylated form) with 14-3-3 proteins; these interactions promote exclusion of ZFP36 from cytoplasmic stress granules in response to arsenite treatment in a MAPKAPK2-dependent manner and does not prevent CCR4-NOT deadenylase complex recruitment or ZFP36-induced ARE-containing mRNA deadenylation and decay processes. Interacts with 14-3-3 proteins; these interactions occur in response to rapamycin in an Akt-dependent manner. Interacts with AGO2 and AGO4. Interacts (via C-terminus) with CNOT1; this interaction occurs in a RNA-independent manner and induces mRNA deadenylation. Interacts (via N-terminus) with CNOT6. Interacts with CNOT6L. Interacts (via C-terminus) with CNOT7; this interaction occurs in a RNA-independent manner, induces mRNA deadenylation and is inhibited in a phosphorylation MAPKAPK2-dependent manner. Interacts (via unphosphorylated form) with CNOT8; this interaction occurs in a RNA-independent manner and is inhibited in a phosphorylation MAPKAPK2-dependent manner. Interacts with DCP1A. Interacts (via N-terminus) with DCP2. Interacts with EDC3. Interacts (via N-terminus) with EXOSC2. Interacts with heat shock 70 kDa proteins. Interacts with KHSRP; this interaction increases upon cytokine-induced treatment. Interacts with MAP3K4; this interaction enhances the association with SH3KBP1/CIN85. Interacts with MAPKAPK2; this interaction occurs upon skeletal muscle satellite cell activation. Interacts with NCL. Interacts with NUP214; this interaction increases upon lipopolysaccharide (LPS) stimulation. Interacts with PABPC1; this interaction occurs in a RNA-dependent manner. Interacts (via hypophosphorylated form) with PABPN1 (via RRM domain and C-terminal arginine-rich region); this interaction occurs in the nucleus in a RNA-independent manner, decreases in presence of single-stranded poly(A) RNA-oligomer and in a p38 MAPK-dependent-manner and inhibits nuclear poly(A) tail synthesis. Interacts with PAN2. Interacts (via C3H1-type zinc finger domains) with PKM. Interacts (via C3H1-type zinc finger domains) with nuclear RNA poly(A) polymerase. Interacts with PPP2CA; this interaction occurs in LPS-stimulated cells and induces ZFP36 dephosphorylation, and hence may promote ARE-containing mRNAs decay. Interacts (via C-terminus) with PRR5L (via C-terminus); this interaction may accelerate ZFP36-mediated mRNA decay during stress. Interacts (via C-terminus) with SFN; this interaction occurs in a phosphorylation-dependent manner. Interacts (via extreme C-terminal region) with SH3KBP1/CIN85 (via SH3 domains); this interaction enhances MAP3K4-induced phosphorylation of ZFP36 at Ser-64 and Ser-91 and does not alter neither ZFP36 binding to ARE-containing transcripts nor TNF-alpha mRNA decay. Interacts with XRN1. Interacts (via C-terminus and Ser-184 phosphorylated form) with YWHAB; this interaction occurs in a p38/MAPKAPK2-dependent manner, increases cytoplasmic localization of ZFP36 and protects ZFP36 from Ser-184 dephosphorylation by serine/threonine phosphatase 2A, and hence may be crucial for stabilizing ARE-containing mRNAs. Interacts (via phosphorylated form) with YWHAE. Interacts (via C-terminus) with YWHAG; this interaction occurs in a phosphorylation-dependent manner. Interacts with YWHAH; this interaction occurs in a phosphorylation-dependent manner. Interacts with YWHAQ; this interaction occurs in a phosphorylation-dependent manner. Interacts with (via C-terminus) YWHAZ; this interaction occurs in a phosphorylation-dependent manner. Does not interact with SH3KBP1. Interacts (via P-P-P-P-G repeats) with GIGYF2; the interaction is direct. Post-translationally, phosphorylated. Phosphorylation at serine and/or threonine residues occurs in a p38 MAPK- and MAPKAPK2-dependent manner. Phosphorylated by MAPKAPK2 at Ser-58 and Ser-184; phosphorylation increases its stability and cytoplasmic localization, promotes binding to 14-3-3 adapter proteins and inhibits the recruitment of cytoplasmic CCR4-NOT and PAN2-PAN3 deadenylase complexes to the mRNA decay machinery, thereby inhibiting ZFP36-induced ARE-containing mRNA deadenylation and decay processes. Phosphorylation by MAPKAPK2 does not impair ARE-containing RNA-binding. Phosphorylated in a MAPKAPK2- and p38 MAPK-dependent manner upon skeletal muscle satellite cell activation; this phosphorylation inhibits ZFP36-mediated mRNA decay activity, and hence stabilizes MYOD1 mRNA. Phosphorylated by MAPK1 upon mitogen stimulation. Phosphorylated at Ser-64 and Ser-91; these phosphorylations increase in a SH3KBP1-dependent manner. Phosphorylated at serine and threonine residues in a pyruvate kinase PKM- and p38 MAPK-dependent manner. Phosphorylation at Ser-58 may participate in the PKM-mediated degradation of ZFP36 in a p38 MAPK-dependent manner. Dephosphorylated by serine/threonine phosphatase 2A at Ser-184. Ubiquitinated; pyruvate kinase (PKM)-dependent ubiquitination leads to proteasomal degradation through a p38 MAPK signaling pathway.

The protein resides in the nucleus. The protein localises to the cytoplasm. Its subcellular location is the cytoplasmic granule. It is found in the P-body. In terms of biological role, zinc-finger RNA-binding protein that destabilizes numerous cytoplasmic AU-rich element (ARE)-containing mRNA transcripts by promoting their poly(A) tail removal or deadenylation, and hence provide a mechanism for attenuating protein synthesis. Acts as an 3'-untranslated region (UTR) ARE mRNA-binding adapter protein to communicate signaling events to the mRNA decay machinery. Recruits deadenylase CNOT7 (and probably the CCR4-NOT complex) via association with CNOT1, and hence promotes ARE-mediated mRNA deadenylation. Also functions by recruiting components of the cytoplasmic RNA decay machinery to the bound ARE-containing mRNAs. Self regulates by destabilizing its own mRNA. Binds to 3'-UTR ARE of numerous mRNAs. Also binds to ARE of its own mRNA. Plays a role in anti-inflammatory responses; suppresses tumor necrosis factor (TNF)-alpha production by stimulating ARE-mediated TNF-alpha mRNA decay and several other inflammatory ARE-containing mRNAs in interferon (IFN)- and/or lipopolysaccharide (LPS)-induced macrophages. Also plays a role in the regulation of dendritic cell maturation at the post-transcriptional level, and hence operates as part of a negative feedback loop to limit the inflammatory response. Promotes ARE-mediated mRNA decay of hypoxia-inducible factor HIF1A mRNA during the response of endothelial cells to hypoxia. Positively regulates early adipogenesis of preadipocytes by promoting ARE-mediated mRNA decay of immediate early genes (IEGs). Negatively regulates hematopoietic/erythroid cell differentiation by promoting ARE-mediated mRNA decay of the transcription factor STAT5B mRNA. Plays a role in maintaining skeletal muscle satellite cell quiescence by promoting ARE-mediated mRNA decay of the myogenic determination factor MYOD1 mRNA. Also associates with and regulates the expression of non-ARE-containing target mRNAs at the post-transcriptional level, such as MHC class I mRNAs. Participates in association with argonaute RISC catalytic components in the ARE-mediated mRNA decay mechanism; assists microRNA (miRNA) targeting ARE-containing mRNAs. May also play a role in the regulation of cytoplasmic mRNA decapping; enhances decapping of ARE-containing RNAs, in vitro. Involved in the delivery of target ARE-mRNAs to processing bodies (PBs). In addition to its cytosolic mRNA-decay function, affects nuclear pre-mRNA processing. Negatively regulates nuclear poly(A)-binding protein PABPN1-stimulated polyadenylation activity on ARE-containing pre-mRNA during LPS-stimulated macrophages. Also involved in the regulation of stress granule (SG) and P-body (PB) formation and fusion. Plays a role in the regulation of keratinocyte proliferation, differentiation and apoptosis. Plays a role as a tumor suppressor by inhibiting cell proliferation in breast cancer cells. The chain is mRNA decay activator protein ZFP36 from Ovis aries (Sheep).